The sequence spans 199 residues: Fe/S biogenesis protein NfuA (199 aa).

The [4Fe-4S] cluster site is built by cysteine 151 and cysteine 154.

The protein belongs to the NfuA family. Homodimer. It depends on [4Fe-4S] cluster as a cofactor.

In terms of biological role, involved in iron-sulfur cluster biogenesis. Binds a 4Fe-4S cluster, can transfer this cluster to apoproteins, and thereby intervenes in the maturation of Fe/S proteins. Could also act as a scaffold/chaperone for damaged Fe/S proteins. This is Fe/S biogenesis protein NfuA from Xanthomonas euvesicatoria pv. vesicatoria (strain 85-10) (Xanthomonas campestris pv. vesicatoria).